The primary structure comprises 218 residues: UPF0319 protein swp_2242 (218 aa).

Residues methionine 1–alanine 21 form the signal peptide.

This sequence belongs to the UPF0319 family.

The sequence is that of UPF0319 protein swp_2242 from Shewanella piezotolerans (strain WP3 / JCM 13877).